The sequence spans 349 residues: Histidinol-phosphate aminotransferase (349 aa).

Lys-210 bears the N6-(pyridoxal phosphate)lysine mark.

The protein belongs to the class-II pyridoxal-phosphate-dependent aminotransferase family. Histidinol-phosphate aminotransferase subfamily. As to quaternary structure, homodimer. It depends on pyridoxal 5'-phosphate as a cofactor.

The enzyme catalyses L-histidinol phosphate + 2-oxoglutarate = 3-(imidazol-4-yl)-2-oxopropyl phosphate + L-glutamate. The protein operates within amino-acid biosynthesis; L-histidine biosynthesis; L-histidine from 5-phospho-alpha-D-ribose 1-diphosphate: step 7/9. In Flavobacterium johnsoniae (strain ATCC 17061 / DSM 2064 / JCM 8514 / BCRC 14874 / CCUG 350202 / NBRC 14942 / NCIMB 11054 / UW101) (Cytophaga johnsonae), this protein is Histidinol-phosphate aminotransferase.